Consider the following 182-residue polypeptide: NADH-quinone oxidoreductase subunit I (182 aa).

4Fe-4S ferredoxin-type domains are found at residues isoleucine 50–alanine 82 and glutamate 92–aspartate 121. Positions 62, 65, 68, 72, 101, 104, 107, and 111 each coordinate [4Fe-4S] cluster.

The protein belongs to the complex I 23 kDa subunit family. In terms of assembly, NDH-1 is composed of 14 different subunits. Subunits NuoA, H, J, K, L, M, N constitute the membrane sector of the complex. Requires [4Fe-4S] cluster as cofactor.

It localises to the cell inner membrane. The catalysed reaction is a quinone + NADH + 5 H(+)(in) = a quinol + NAD(+) + 4 H(+)(out). NDH-1 shuttles electrons from NADH, via FMN and iron-sulfur (Fe-S) centers, to quinones in the respiratory chain. The immediate electron acceptor for the enzyme in this species is believed to be ubiquinone. Couples the redox reaction to proton translocation (for every two electrons transferred, four hydrogen ions are translocated across the cytoplasmic membrane), and thus conserves the redox energy in a proton gradient. The sequence is that of NADH-quinone oxidoreductase subunit I from Psychrobacter cryohalolentis (strain ATCC BAA-1226 / DSM 17306 / VKM B-2378 / K5).